We begin with the raw amino-acid sequence, 376 residues long: Calcium uniporter protein, mitochondrial (376 aa).

The transit peptide at 1–34 (MAAKVCRSVLLLSRSSGAVASSAYPAFGVSSQRH) directs the protein to the mitochondrion. Residues 35 to 257 (QGTKTEALSM…LSKKAERRTT (223 aa)) lie on the Mitochondrial matrix side of the membrane. The segment at 99 to 189 (VSVVYQNGLP…TSYLVQPPRR (91 aa)) is N-terminal MCU domain. Residues 213-254 (TLRIEEHQLNKERELIGRLEDLNSQLQPLEKVKEELSKKAER) are a coiled coil. A helical transmembrane segment spans residues 258 to 280 (WVLWGGMAYMATQFGILARLTWW). Residues 281–289 (EYSWDIMEP) lie on the Mitochondrial intermembrane side of the membrane. The Selectivity filter signature appears at 284-292 (WDIMEPVTY). Ca(2+) is bound at residue Glu-288. Residues 290–309 (VTYFITYGTAMAMYAYFVLT) traverse the membrane as a helical segment. Positions 309–314 (TRQEYL) are juxtamembrane helix. Topologically, residues 310-376 (RQEYLYPDAR…PIQQIDTSKD (67 aa)) are mitochondrial matrix. The stretch at 336 to 363 (FDIEKYNKLKDAIAEAELDLKRLRDPLQ) forms a coiled coil.

It belongs to the MCU (TC 1.A.77) family. In terms of assembly, homotetramer. Component of the uniplex complex.

It localises to the mitochondrion inner membrane. The enzyme catalyses Ca(2+)(in) = Ca(2+)(out). MCU channel activity is regulated by the heterodimer composed of micu1 and micu2, which act as calcium-sensors. At low calcium levels, micu1 occludes the pore of the MCU channel, preventing mitochondrial calcium uptake. At higher calcium levels, calcium-binding to micu1 and micu2 induces a conformational change that weakens mcu-micu1 interactions and moves the micu1-micu2 heterodimer away from the pore, allowing calcium permeation through the channel. MCU channel activity is gated by emre/smdt1 via the juxtamembrane helix loop. Inhibited by ruthenium red or its derivative Ru360. Channel-forming and calcium-conducting subunit of the mitochondrial inner membrane calcium uniporter complex (uniplex), which mediates calcium uptake into the mitochondrial matrix. Mcu channel activity is regulated by the calcium-sensor subunits of the uniplex micu1 and micu2. Mitochondrial calcium homeostasis plays key roles in cellular physiology and regulates ATP production, cytoplasmic calcium signals and activation of cell death pathways. Involved in buffering the amplitude of systolic calcium rises in cardiomyocytes. While dispensable for baseline homeostatic cardiac function, acts as a key regulator of short-term mitochondrial calcium loading underlying a 'fight-or-flight' response during acute stress: acts by mediating a rapid increase of mitochondrial calcium in pacemaker cells. Mitochondrial calcium uptake in skeletal muscle cells is involved in muscle size in adults. The protein is Calcium uniporter protein, mitochondrial of Danio rerio (Zebrafish).